The chain runs to 165 residues: Transcription elongation factor GreA (165 aa).

A coiled-coil region spans residues Ala-55 to Lys-78.

Belongs to the GreA/GreB family.

Its function is as follows. Necessary for efficient RNA polymerase transcription elongation past template-encoded arresting sites. The arresting sites in DNA have the property of trapping a certain fraction of elongating RNA polymerases that pass through, resulting in locked ternary complexes. Cleavage of the nascent transcript by cleavage factors such as GreA or GreB allows the resumption of elongation from the new 3'terminus. GreA releases sequences of 2 to 3 nucleotides. This is Transcription elongation factor GreA from Streptomyces coelicolor (strain ATCC BAA-471 / A3(2) / M145).